The sequence spans 440 residues: UPF0489 protein C5orf22 homolog (440 aa).

A disordered region spans residues 187-207; that stretch reads VEGSSSGIQSSTSESSEDGLM. The span at 188–200 shows a compositional bias: low complexity; that stretch reads EGSSSGIQSSTSE.

It belongs to the UPF0489 family.

The protein is UPF0489 protein C5orf22 homolog of Xenopus tropicalis (Western clawed frog).